A 371-amino-acid polypeptide reads, in one-letter code: N-acetyldiaminopimelate deacetylase (371 aa).

The active site involves D68. E127 (proton acceptor) is an active-site residue.

The protein belongs to the peptidase M20A family. N-acetyldiaminopimelate deacetylase subfamily.

The catalysed reaction is N-acetyl-(2S,6S)-2,6-diaminopimelate + H2O = (2S,6S)-2,6-diaminopimelate + acetate. It functions in the pathway amino-acid biosynthesis; L-lysine biosynthesis via DAP pathway; LL-2,6-diaminopimelate from (S)-tetrahydrodipicolinate (acetylase route): step 3/3. Its function is as follows. Catalyzes the conversion of N-acetyl-diaminopimelate to diaminopimelate and acetate. This is N-acetyldiaminopimelate deacetylase from Listeria monocytogenes serotype 4a (strain HCC23).